The primary structure comprises 315 residues: MSDSLRIIFAGTPDFAARHLDVLLSSGHEVVGVFTQPDRPAGRGNKLTPSPVKVLAEQHSIPVFQPKSLRPAENQAMVEALDADVMVVVAYGLILPQPVLSMPRLGCINVHGSLLPLWRGAAPIQRALWAGDSETGVTIMQMDVGLDTGAMLHKIACPILPQDTSATLYDKLAALGPRGLLETLERLADSSAVAEAQNDAFATYAEKLSKEEARLNWLLSAEQLERCIRAFNPWPVSYFIVDEQPVKVWKAEVIAKSHGSQPGTILQADKQGIQVAAADGILNIQELQPAGKKVMSAQDLLNSRREWFVPGNTLN.

113–116 lines the (6S)-5,6,7,8-tetrahydrofolate pocket; it reads SLLP.

This sequence belongs to the Fmt family.

The catalysed reaction is L-methionyl-tRNA(fMet) + (6R)-10-formyltetrahydrofolate = N-formyl-L-methionyl-tRNA(fMet) + (6S)-5,6,7,8-tetrahydrofolate + H(+). Attaches a formyl group to the free amino group of methionyl-tRNA(fMet). The formyl group appears to play a dual role in the initiator identity of N-formylmethionyl-tRNA by promoting its recognition by IF2 and preventing the misappropriation of this tRNA by the elongation apparatus. In Pectobacterium atrosepticum (strain SCRI 1043 / ATCC BAA-672) (Erwinia carotovora subsp. atroseptica), this protein is Methionyl-tRNA formyltransferase.